Consider the following 587-residue polypeptide: Kelch-like ECH-associated protein 1B (587 aa).

Residues Cys44–Glu117 form the BTB domain. One can recognise a BACK domain in the interval Ile153–Leu253. 6 Kelch repeats span residues Leu292–Gly337, Leu338–Gly388, Met389–Arg435, Leu436–Asn482, Ile484–Gly529, and Arg530–Glu576.

This sequence belongs to the KEAP1 family. Homodimer and heterodimer; heterodimerizes with keap1a. Component of the BCR(KEAP1) E3 ubiquitin ligase complex, at least composed of 2 molecules of cul3, 2 molecules of keap1 (keap1a and/or keap1b), and rbx1. Interacts with nfe2l2/nrf2; the interaction is direct. In terms of processing, non-enzymatic covalent modifications of reactive cysteines by electrophile metabolites inactivate the BCR(KEAP1) complex. As to expression, widely expressed.

Its subcellular location is the cytoplasm. The protein resides in the nucleus. It functions in the pathway protein modification; protein ubiquitination. Its activity is regulated as follows. Ubiquitin ligase activity of the BCR(KEAP1) complex is inhibited by oxidative stress and electrophile metabolites such as sulforaphane. Electrophile metabolites react with reactive cysteine residues in keap1 and trigger non-enzymatic covalent modifications of these cysteine residues, leading to inactivate the ubiquitin ligase activity of the BCR(KEAP1) complex. Substrate-specific adapter of a BCR (BTB-CUL3-RBX1) E3 ubiquitin ligase complex that regulates the response to oxidative stress by targeting nfe2l2/nrf2 for ubiquitination. Keap1 acts as a key sensor of oxidative and electrophilic stress: in normal conditions, the BCR(KEAP1) complex mediates ubiquitination and degradation of nfe2l2/nrf2, a transcription factor regulating expression of many cytoprotective genes. In response to oxidative stress, different electrophile metabolites trigger non-enzymatic covalent modifications of highly reactive cysteine residues in KEAP1, leading to inactivate the ubiquitin ligase activity of the BCR(KEAP1) complex, promoting nfe2l2/nrf2 nuclear accumulation and expression of phase II detoxifying enzymes. In Danio rerio (Zebrafish), this protein is Kelch-like ECH-associated protein 1B.